The sequence spans 253 residues: Imidazole glycerol phosphate synthase subunit HisF (253 aa).

Active-site residues include Asp-11 and Asp-130.

Belongs to the HisA/HisF family. In terms of assembly, heterodimer of HisH and HisF.

Its subcellular location is the cytoplasm. It catalyses the reaction 5-[(5-phospho-1-deoxy-D-ribulos-1-ylimino)methylamino]-1-(5-phospho-beta-D-ribosyl)imidazole-4-carboxamide + L-glutamine = D-erythro-1-(imidazol-4-yl)glycerol 3-phosphate + 5-amino-1-(5-phospho-beta-D-ribosyl)imidazole-4-carboxamide + L-glutamate + H(+). The protein operates within amino-acid biosynthesis; L-histidine biosynthesis; L-histidine from 5-phospho-alpha-D-ribose 1-diphosphate: step 5/9. Its function is as follows. IGPS catalyzes the conversion of PRFAR and glutamine to IGP, AICAR and glutamate. The HisF subunit catalyzes the cyclization activity that produces IGP and AICAR from PRFAR using the ammonia provided by the HisH subunit. In Clostridium botulinum (strain Okra / Type B1), this protein is Imidazole glycerol phosphate synthase subunit HisF.